Here is a 420-residue protein sequence, read N- to C-terminus: Phosphoribosylamine--glycine ligase (420 aa).

The ATP-grasp domain occupies 108–314 (KEIMVKYGVP…FAQNITDILD (207 aa)). 134–195 (IEKHGAPIVV…EEFLEGEEFS (62 aa)) is an ATP binding site. Mg(2+)-binding residues include Glu-284 and Asn-286.

This sequence belongs to the GARS family. Mg(2+) is required as a cofactor. Requires Mn(2+) as cofactor.

The enzyme catalyses 5-phospho-beta-D-ribosylamine + glycine + ATP = N(1)-(5-phospho-beta-D-ribosyl)glycinamide + ADP + phosphate + H(+). It functions in the pathway purine metabolism; IMP biosynthesis via de novo pathway; N(1)-(5-phospho-D-ribosyl)glycinamide from 5-phospho-alpha-D-ribose 1-diphosphate: step 2/2. This is Phosphoribosylamine--glycine ligase from Streptococcus pneumoniae serotype 4 (strain ATCC BAA-334 / TIGR4).